The following is a 138-amino-acid chain: Vesicle transport protein GOT1B (138 aa).

Residue Met1 is modified to N-acetylmethionine. Over 1–9 (MISLTDTQK) the chain is Cytoplasmic. A helical transmembrane segment spans residues 10–30 (IGMGLTGFGVFFLFFGMILFF). At 31–32 (DK) the chain is on the lumenal side. A helical membrane pass occupies residues 33 to 53 (ALLAIGNVLFVAGLAFVIGLE). Residues 54 to 68 (RTFRFFFQRHKVKAT) lie on the Cytoplasmic side of the membrane. Residue Glu90 is a topological domain, lumenal. The helical transmembrane segment at 91–109 (IYGFFLLFRGFFPVVVGFI) threads the bilayer. At 110 to 138 (RRVPVLGSLLNLPGIRSFVDKVGESNNMV) the chain is on the cytoplasmic side.

This sequence belongs to the GOT1 family.

Its subcellular location is the golgi apparatus membrane. May be involved in fusion of ER-derived transport vesicles with the Golgi complex. The sequence is that of Vesicle transport protein GOT1B (Golt1b) from Mus musculus (Mouse).